A 177-amino-acid polypeptide reads, in one-letter code: Cell division protein ZapC (177 aa).

The protein belongs to the ZapC family. As to quaternary structure, interacts directly with FtsZ.

It is found in the cytoplasm. In terms of biological role, contributes to the efficiency of the cell division process by stabilizing the polymeric form of the cell division protein FtsZ. Acts by promoting interactions between FtsZ protofilaments and suppressing the GTPase activity of FtsZ. This Shewanella oneidensis (strain ATCC 700550 / JCM 31522 / CIP 106686 / LMG 19005 / NCIMB 14063 / MR-1) protein is Cell division protein ZapC.